The chain runs to 111 residues: Cytochrome c6 (111 aa).

The first 25 residues, 1 to 25 (MKKIFSLVLLGIALFTFAFSSPALA), serve as a signal peptide directing secretion. Residues cysteine 39, cysteine 42, histidine 43, and methionine 83 each contribute to the heme c site.

Belongs to the cytochrome c family. PetJ subfamily. Monomer. Binds 1 heme c group covalently per subunit.

Its subcellular location is the cellular thylakoid lumen. Functions as an electron carrier between membrane-bound cytochrome b6-f and photosystem I in oxygenic photosynthesis. This is Cytochrome c6 (petJ) from Nostoc sp. (strain PCC 7120 / SAG 25.82 / UTEX 2576).